The sequence spans 270 residues: MVAVEQSEASRLGPVFDSCRANNRAALIGYLPTGYPDVPASVAAMTALVESGCDIIEVGVPYSDPGMDGPTIARATEAALRGGVRVRDTLAAVEAISIAGGRAVVMTYWNPVLRYGVDAFARDLAAAGGLGLITPDLIPDEAQQWLAASEEHRLDRIFLVAPSSTPERLAATVEASRGFVYAASTMGVTGARDAVSQAAPELVGRVKAVSDIPVGVGLGVRSRAQAAQIAQYADGVIVGSALVTALTEGLPRLRALTGELAAGVRLGMSA.

Active-site proton acceptor residues include Glu57 and Asp68.

Belongs to the TrpA family. In terms of assembly, tetramer of two alpha and two beta chains.

The catalysed reaction is (1S,2R)-1-C-(indol-3-yl)glycerol 3-phosphate + L-serine = D-glyceraldehyde 3-phosphate + L-tryptophan + H2O. It functions in the pathway amino-acid biosynthesis; L-tryptophan biosynthesis; L-tryptophan from chorismate: step 5/5. Its function is as follows. The alpha subunit is responsible for the aldol cleavage of indoleglycerol phosphate to indole and glyceraldehyde 3-phosphate. This Mycobacterium bovis (strain ATCC BAA-935 / AF2122/97) protein is Tryptophan synthase alpha chain.